Here is a 79-residue protein sequence, read N- to C-terminus: Acyl carrier protein (79 aa).

Residues 2-77 enclose the Carrier domain; the sequence is SEIGERVKKI…DATKFLEKNA (76 aa). Serine 37 carries the O-(pantetheine 4'-phosphoryl)serine modification.

This sequence belongs to the acyl carrier protein (ACP) family. Post-translationally, 4'-phosphopantetheine is transferred from CoA to a specific serine of apo-ACP by AcpS. This modification is essential for activity because fatty acids are bound in thioester linkage to the sulfhydryl of the prosthetic group.

Its subcellular location is the cytoplasm. The protein operates within lipid metabolism; fatty acid biosynthesis. Its function is as follows. Carrier of the growing fatty acid chain in fatty acid biosynthesis. The protein is Acyl carrier protein of Rhodopseudomonas palustris (strain HaA2).